A 151-amino-acid chain; its full sequence is uncharacterized protein (151 aa).

This is an uncharacterized protein from Aquifex aeolicus (strain VF5).